The primary structure comprises 353 residues: UPF0283 membrane protein YcjF (353 aa).

Residues 1-19 show a composition bias toward basic and acidic residues; that stretch reads MSEPLKPRIDFAEPLKEEP. The disordered stretch occupies residues 1–35; it reads MSEPLKPRIDFAEPLKEEPTSAFKAQQTFSEAESR. 3 helical membrane-spanning segments follow: residues 70–90, 100–120, and 213–233; these read MVMGGLALFGASVVGQGIQWT, VALGGCAAGALIVGAGVGSVV, and ESTLMIAVSPLALVDMAFIAW.

This sequence belongs to the UPF0283 family.

The protein resides in the cell inner membrane. The protein is UPF0283 membrane protein YcjF of Salmonella agona (strain SL483).